Consider the following 423-residue polypeptide: Serine hydroxymethyltransferase (423 aa).

(6S)-5,6,7,8-tetrahydrofolate is bound by residues Leu-120 and 124–126 (GHL). N6-(pyridoxal phosphate)lysine is present on Lys-229. 353-355 (SPF) provides a ligand contact to (6S)-5,6,7,8-tetrahydrofolate.

Belongs to the SHMT family. Homodimer. It depends on pyridoxal 5'-phosphate as a cofactor.

The protein localises to the cytoplasm. It catalyses the reaction (6R)-5,10-methylene-5,6,7,8-tetrahydrofolate + glycine + H2O = (6S)-5,6,7,8-tetrahydrofolate + L-serine. Its pathway is one-carbon metabolism; tetrahydrofolate interconversion. The protein operates within amino-acid biosynthesis; glycine biosynthesis; glycine from L-serine: step 1/1. In terms of biological role, catalyzes the reversible interconversion of serine and glycine with tetrahydrofolate (THF) serving as the one-carbon carrier. This reaction serves as the major source of one-carbon groups required for the biosynthesis of purines, thymidylate, methionine, and other important biomolecules. Also exhibits THF-independent aldolase activity toward beta-hydroxyamino acids, producing glycine and aldehydes, via a retro-aldol mechanism. This is Serine hydroxymethyltransferase from Prochlorococcus marinus (strain MIT 9515).